The chain runs to 249 residues: ATP synthase subunit a, chloroplastic (249 aa).

A run of 5 helical transmembrane segments spans residues 40 to 60, 97 to 117, 136 to 156, 201 to 221, and 222 to 242; these read QVLI…VIAI, VPFI…GALL, INTT…AGLS, LVVV…VMFL, and GLFT…AYIG.

This sequence belongs to the ATPase A chain family. As to quaternary structure, F-type ATPases have 2 components, CF(1) - the catalytic core - and CF(0) - the membrane proton channel. CF(1) has five subunits: alpha(3), beta(3), gamma(1), delta(1), epsilon(1). CF(0) has four main subunits: a, b, b' and c.

Its subcellular location is the plastid. It is found in the chloroplast thylakoid membrane. Functionally, key component of the proton channel; it plays a direct role in the translocation of protons across the membrane. In Barbarea verna (Land cress), this protein is ATP synthase subunit a, chloroplastic.